The following is a 572-amino-acid chain: Glypican-5 (572 aa).

The N-terminal stretch at 1–24 (MDAQTWPVGFRCLLLLALVGSARS) is a signal peptide. N-linked (GlcNAc...) asparagine glycosylation is found at N120 and N237. Positions 355-375 (SPRCSFDQSKEKHGMKTTTRN) are disordered. O-linked (Xyl...) (glycosaminoglycan) serine glycans are attached at residues S441, S486, S495, S507, and S509. Residue N527 is glycosylated (N-linked (GlcNAc...) asparagine).

It belongs to the glypican family. In terms of tissue distribution, in adult, primarily expressed in the brain. Also detected in fetal brain, lung and liver.

Its subcellular location is the cell membrane. It is found in the secreted. The protein localises to the extracellular space. In terms of biological role, cell surface proteoglycan that bears heparan sulfate. The sequence is that of Glypican-5 (GPC5) from Homo sapiens (Human).